The chain runs to 578 residues: Phosphoenolpyruvate-protein phosphotransferase (578 aa).

The active-site Tele-phosphohistidine intermediate is the histidine 195. 2 residues coordinate phosphoenolpyruvate: arginine 302 and arginine 338. Mg(2+) contacts are provided by glutamate 437 and aspartate 461. Phosphoenolpyruvate-binding positions include 460-461 (ND) and arginine 471. Cysteine 508 serves as the catalytic Proton donor.

The protein belongs to the PEP-utilizing enzyme family. As to quaternary structure, homodimer. Mg(2+) serves as cofactor.

It localises to the cytoplasm. The enzyme catalyses L-histidyl-[protein] + phosphoenolpyruvate = N(pros)-phospho-L-histidyl-[protein] + pyruvate. General (non sugar-specific) component of the phosphoenolpyruvate-dependent sugar phosphotransferase system (sugar PTS). This major carbohydrate active-transport system catalyzes the phosphorylation of incoming sugar substrates concomitantly with their translocation across the cell membrane. Enzyme I transfers the phosphoryl group from phosphoenolpyruvate (PEP) to the phosphoryl carrier protein (HPr). This Geobacillus stearothermophilus (Bacillus stearothermophilus) protein is Phosphoenolpyruvate-protein phosphotransferase (ptsI).